Reading from the N-terminus, the 440-residue chain is 3-phosphoshikimate 1-carboxyvinyltransferase (440 aa).

3-phosphoshikimate-binding residues include Lys-25, Ser-26, and Arg-30. Lys-25 contacts phosphoenolpyruvate. Phosphoenolpyruvate contacts are provided by Gly-96 and Arg-124. Residues Ser-168, Gln-169, Asp-310, and Lys-337 each contribute to the 3-phosphoshikimate site. Gln-169 serves as a coordination point for phosphoenolpyruvate. Asp-310 serves as the catalytic Proton acceptor. Arg-341, Arg-382, and Lys-409 together coordinate phosphoenolpyruvate.

It belongs to the EPSP synthase family. Monomer.

Its subcellular location is the cytoplasm. It carries out the reaction 3-phosphoshikimate + phosphoenolpyruvate = 5-O-(1-carboxyvinyl)-3-phosphoshikimate + phosphate. It functions in the pathway metabolic intermediate biosynthesis; chorismate biosynthesis; chorismate from D-erythrose 4-phosphate and phosphoenolpyruvate: step 6/7. In terms of biological role, catalyzes the transfer of the enolpyruvyl moiety of phosphoenolpyruvate (PEP) to the 5-hydroxyl of shikimate-3-phosphate (S3P) to produce enolpyruvyl shikimate-3-phosphate and inorganic phosphate. The sequence is that of 3-phosphoshikimate 1-carboxyvinyltransferase from Chlamydia trachomatis serovar A (strain ATCC VR-571B / DSM 19440 / HAR-13).